The primary structure comprises 433 residues: 3-phosphoshikimate 1-carboxyvinyltransferase (433 aa).

3-phosphoshikimate contacts are provided by Lys15, Ser16, and Arg20. Lys15 is a binding site for phosphoenolpyruvate. The phosphoenolpyruvate site is built by Gly96 and Arg124. 3-phosphoshikimate is bound by residues Ser169, Gln171, Ser195, Asp318, and Lys345. Residue Gln171 coordinates phosphoenolpyruvate. Asp318 functions as the Proton acceptor in the catalytic mechanism. Phosphoenolpyruvate is bound by residues Arg349 and Arg393.

This sequence belongs to the EPSP synthase family. In terms of assembly, monomer.

The protein localises to the cytoplasm. The enzyme catalyses 3-phosphoshikimate + phosphoenolpyruvate = 5-O-(1-carboxyvinyl)-3-phosphoshikimate + phosphate. Its pathway is metabolic intermediate biosynthesis; chorismate biosynthesis; chorismate from D-erythrose 4-phosphate and phosphoenolpyruvate: step 6/7. Functionally, catalyzes the transfer of the enolpyruvyl moiety of phosphoenolpyruvate (PEP) to the 5-hydroxyl of shikimate-3-phosphate (S3P) to produce enolpyruvyl shikimate-3-phosphate and inorganic phosphate. The protein is 3-phosphoshikimate 1-carboxyvinyltransferase of Pelodictyon phaeoclathratiforme (strain DSM 5477 / BU-1).